We begin with the raw amino-acid sequence, 483 residues long: BTB/POZ domain and ankyrin repeat-containing protein NBCL (483 aa).

A BTB domain is found at 25 to 109 (SDVTFSVEGR…LYSGQVSIVP (85 aa)). The C2HC NPR-type zinc-finger motif lies at 115–129 (RPNCGERACWHTHCT). Residues Cys-118, Cys-123, His-125, and Cys-128 each contribute to the Zn(2+) site. ANK repeat units lie at residues 254–283 (QKIR…LNLD), 284–313 (EALA…DVNY), 318–347 (SGKT…DPNV), and 351–385 (DGVT…KLRL). The disordered stretch occupies residues 401-437 (EGNANANSSNNNNAPCSAATPIYPPMNEDHNSSSSNA). Low complexity predominate over residues 403 to 419 (NANANSSNNNNAPCSAA).

Belongs to the plant 'ANKYRIN-BTB/POZ' family. 'NOOT-BOP-COCH-like' (NBCL) subfamily. In terms of assembly, homodimer. Interacts with APP1 around the plasma membrane and in the nucleus; this interaction disturbs APP1-mediated regulation of the nuclear transcription factor Y subunit (NF-YA1). Mainly expressed in root nodules, to a lesser extent in shoot apical meristems (SAM) and root meristems (RM), and barely in leaves, non-nodulating roots and root apical meristems (RAM).

It is found in the nucleus. The protein resides in the cytoplasm. It localises to the cell membrane. The protein operates within protein modification; protein ubiquitination. May act as a substrate-specific adapter of an E3 ubiquitin-protein ligase complex (CUL3-RBX1-BTB) which mediates the ubiquitination and subsequent proteasomal degradation of target proteins. Transcriptional co-regulator involved in the promotion of leaf and floral meristem fate and determinacy. Required for the abscission of senescent organs, probably by regulating the cell wall disorganization in abscission zones (AZs, e.g. pulvini at the base of leaves). Involved in the coordination of the symbiotic nodule developmental program; promotes the formation of root nodules by interacting directly with APP1 to modulate the expression of the nuclear transcription factor Y subunit (NF-YA1), a key nodulin. Necessary for the robust maintenance of nodule identity throughout the nodule developmental program. The chain is BTB/POZ domain and ankyrin repeat-containing protein NBCL from Lotus japonicus (Lotus corniculatus var. japonicus).